The following is a 558-amino-acid chain: T-complex protein 1 subunit gamma (558 aa).

A disulfide bridge links Cys-381 with Cys-387.

Belongs to the TCP-1 chaperonin family. In terms of assembly, heterooligomeric complex of about 850 to 900 kDa that forms two stacked rings, 12 to 16 nm in diameter.

The protein localises to the cytoplasm. Functionally, molecular chaperone; assists the folding of proteins upon ATP hydrolysis. Known to play a role, in vitro, in the folding of actin and tubulin. The polypeptide is T-complex protein 1 subunit gamma (Thalassiosira weissflogii (Marine diatom)).